The following is a 276-amino-acid chain: Large ribosomal subunit protein uL2 (276 aa).

2 disordered regions span residues 1 to 58 and 218 to 276; these read MAIR…GGGH and RPIT…KNRK. Positions 16 to 27 are enriched in polar residues; the sequence is ASVSDFSDLTRS. The span at 255–276 shows a compositional bias: basic residues; it reads RRPKKASNKMIVRRRPNGKNRK.

The protein belongs to the universal ribosomal protein uL2 family. As to quaternary structure, part of the 50S ribosomal subunit. Forms a bridge to the 30S subunit in the 70S ribosome.

Its function is as follows. One of the primary rRNA binding proteins. Required for association of the 30S and 50S subunits to form the 70S ribosome, for tRNA binding and peptide bond formation. It has been suggested to have peptidyltransferase activity; this is somewhat controversial. Makes several contacts with the 16S rRNA in the 70S ribosome. The protein is Large ribosomal subunit protein uL2 of Bifidobacterium animalis subsp. lactis (strain AD011).